The following is a 742-amino-acid chain: Two pore calcium channel protein 1 (742 aa).

The disordered stretch occupies residues 1–37 (MSEAEAPLITEEAAERGLASSGSRRLSDGAGGQGSRK). Residues 1–82 (MSEAEAPLIT…NDTRFGRAMS (82 aa)) lie on the Cytoplasmic side of the membrane. A helical membrane pass occupies residues 83 to 103 (FYFVYLRLDWLWSLNLFALIL). The Extracellular portion of the chain corresponds to 104–140 (LNFLEKPLWCRKDALQAYDQRDLYFLGQLPYFSKTES). A helical transmembrane segment spans residues 141–161 (LIYEGLTLVILVMDIFCPLSY). Residues 162-176 (EGLNIFWRSTTNKLK) lie on the Cytoplasmic side of the membrane. Residues 177–197 (IVLLFILACDILVFAFSSQPF) traverse the membrane as a helical segment. Topologically, residues 198–204 (RLAPYIR) are extracellular. The helical; Voltage-sensor transmembrane segment at 205–226 (VVFLIMTIRELRMCAITLAGLI) threads the bilayer. Residues 227–247 (GTYLNVLALSLLFLLFASWLA) traverse the membrane as a helical segment. Residues 248 to 258 (YVTFEDTPQGK) are Extracellular-facing. Residues 259–273 (TIFSSYGVTLYQMFV) constitute an intramembrane region (pore-forming). Topologically, residues 274-296 (LFTTSNNPDVWVHAYKIPRWYSL) are extracellular. Residues 297-317 (FFIVYVLLGVYFLTNLILAVI) form a helical membrane-spanning segment. Residues 318 to 446 (YDSFKEQFAK…SFVRSRMFEY (129 aa)) are Cytoplasmic-facing. EF-hand domains lie at 335 to 370 (IRKN…LNKY) and 376 to 411 (TSRE…IAIK). Residues 447–467 (IIVFVLLINLVAVIIETTLDI) form a helical membrane-spanning segment. Over 468–480 (ENSSSQETWQEVE) the chain is Extracellular. An N-linked (GlcNAc...) asparagine glycan is attached at Asn469. The helical transmembrane segment at 481–501 (FFLGWIYVAEMALKIFSLGFG) threads the bilayer. Residues 502 to 510 (AYWMEGQNK) lie on the Cytoplasmic side of the membrane. The chain crosses the membrane as a helical span at residues 511–531 (FDFVLTWTIFIGETLTFAFPS). Topologically, residues 532–540 (KLPFLSNGE) are extracellular. Residues 541–558 (WIRYLLLGRVLRLTRILL) form a helical; Voltage-sensor membrane-spanning segment. The Cytoplasmic segment spans residues 559–582 (QVQRFRAFVATFFTLMSSLMPYLG). A helical transmembrane segment spans residues 583 to 603 (IVFCVLCMYCSIGLQIFGGIV). The Extracellular segment spans residues 604-627 (YAGNPTLEETDLFNNDYLLFNFND). An intramembrane region (pore-forming) is located at residues 628–642 (YPSGMVTLFNLLVMG). The Extracellular portion of the chain corresponds to 643–663 (NWQVWMESYWQLTGTSWSLIY). A helical membrane pass occupies residues 664–684 (FVSFYLISILLLLNLIVAFVL). The Cytoplasmic segment spans residues 685–742 (EAFFAEMELEKGEEVDIQNPTSGGIKKRRSMRVRSKGTMVDILLHHMLSNELDGSQNS).

The protein belongs to the calcium channel alpha-1 subunit (TC 1.A.1.11) family. Two pore calcium channel subfamily. Homodimer.

It localises to the membrane. Inhibited by Al(3+). Functionally, functions as a voltage-gated inward-rectifying Ca(2+) channel (VDCC) across the plasma membrane that mediates sucrose-induced Ca(2+) influx in autotrophically grown leaf cells. Acts as the major ROS-responsive Ca(2+) channel and is the possible target of Al-dependent inhibition. Plays a regulatory role in defense responses. This Triticum aestivum (Wheat) protein is Two pore calcium channel protein 1 (TPC1).